The following is a 379-amino-acid chain: MATAGKVIKCKAAVAWEAGKPLTMEEVEVAPPQAMEVRVKILFTSLCHTDVYFWEAKGQIPMFPRIFGHEAGGIVESVGEGVTDVAPGDHVLPVFTGECKECPHCKSAESNMCDLLRINTDRGVMIGDGKSRFSIGGKPIYHFVGTSTFSEYTVMHVGCVAKINPEAPLDKVCVLSCGISTGLGASINVAKPPKGSTVAIFGLGAVGLAAAEGARIAGASRIIGVDLNAVRFEEARKFGCTEFVNPKDHTKPVQQVLADMTNGGVDRSVECTGNVNAMIQAFECVHDGWGVAVLVGVPHKDAEFKTHPMNFLNERTLKGTFFGNFKPRTDLPNVVEMYMKKELEVEKFITHSVPFSEINTAFDLMAKGEGIRCIIRMDN.

Zn(2+) contacts are provided by cysteine 47, threonine 49, histidine 69, cysteine 99, cysteine 102, cysteine 105, cysteine 113, and cysteine 177. An alcohol-binding residues include threonine 49 and histidine 69. Position 49 (threonine 49) interacts with NAD(+). NAD(+) contacts are provided by residues 202–207 (GLGAVG), aspartate 226, arginine 231, threonine 272, valine 295, 295–297 (VGV), phenylalanine 322, and arginine 372.

The protein belongs to the zinc-containing alcohol dehydrogenase family. As to quaternary structure, homodimer. Requires Zn(2+) as cofactor.

It is found in the cytoplasm. It carries out the reaction a primary alcohol + NAD(+) = an aldehyde + NADH + H(+). The enzyme catalyses a secondary alcohol + NAD(+) = a ketone + NADH + H(+). In Hordeum vulgare (Barley), this protein is Alcohol dehydrogenase 1 (ADH1).